A 490-amino-acid polypeptide reads, in one-letter code: AP-5 complex subunit mu-1 (490 aa).

An MHD domain is found at 206–476 (KPQVSISITE…LISSDYYIWN (271 aa)).

This sequence belongs to the adaptor complexes medium subunit family. As to quaternary structure, probably part of the adaptor protein complex 5 (AP-5) a tetramer composed of AP5B1, AP5M1, AP5S1 and AP5Z1. In terms of tissue distribution, expressed in various tumor cell lines including Jurkat, Hep-G2 and HeLa.

The protein localises to the cytoplasm. The protein resides in the cytosol. It localises to the late endosome membrane. It is found in the lysosome membrane. Its function is as follows. As part of AP-5, a probable fifth adaptor protein complex it may be involved in endosomal transport. According to PubMed:18395520, it may play a role in cell death. The protein is AP-5 complex subunit mu-1 (AP5M1) of Homo sapiens (Human).